The following is a 478-amino-acid chain: Putative L-amino-acid oxidase YobN (478 aa).

FAD is bound by residues Ser34, Glu53, Arg61, and 80 to 81 (MR). Residues Arg81 and Tyr369 each coordinate substrate. Residues Glu451 and 460 to 463 (MQGA) contribute to the FAD site.

The protein belongs to the flavin monoamine oxidase family. FIG1 subfamily. FAD serves as cofactor.

It carries out the reaction an L-alpha-amino acid + O2 + H2O = a 2-oxocarboxylate + H2O2 + NH4(+). This Bacillus subtilis (strain 168) protein is Putative L-amino-acid oxidase YobN (yobN).